Reading from the N-terminus, the 268-residue chain is Tryptophan synthase alpha chain (268 aa).

Residues glutamate 49 and aspartate 60 each act as proton acceptor in the active site.

Belongs to the TrpA family. As to quaternary structure, tetramer of two alpha and two beta chains.

It carries out the reaction (1S,2R)-1-C-(indol-3-yl)glycerol 3-phosphate + L-serine = D-glyceraldehyde 3-phosphate + L-tryptophan + H2O. It participates in amino-acid biosynthesis; L-tryptophan biosynthesis; L-tryptophan from chorismate: step 5/5. The alpha subunit is responsible for the aldol cleavage of indoleglycerol phosphate to indole and glyceraldehyde 3-phosphate. The protein is Tryptophan synthase alpha chain of Aeromonas hydrophila subsp. hydrophila (strain ATCC 7966 / DSM 30187 / BCRC 13018 / CCUG 14551 / JCM 1027 / KCTC 2358 / NCIMB 9240 / NCTC 8049).